Consider the following 61-residue polypeptide: TMCYSHTTTSRAILTNCGENSCYRKSRRHPPKMVLGRGCGCPPGDDNLEVKCCTSPDKCNY.

4 cysteine pairs are disulfide-bonded: Cys-3-Cys-22, Cys-17-Cys-39, Cys-41-Cys-52, and Cys-53-Cys-59.

This sequence belongs to the three-finger toxin family. Short-chain subfamily. Acn-esterase inhibitor sub-subfamily. In terms of tissue distribution, expressed by the venom gland.

Its subcellular location is the secreted. Functionally, interferes with neuromuscular transmission by inhibiting the enzyme acetylcholinesterase (AChE) present at the neuromuscular junction. It selectively binds and inhibits with a 1:1 stoichiometry the mammalian and electric fish AChE at picomolar concentrations. It is highly specific for the peripheral site of AChE and blocks the entry of acetylcholine into the active site of the enzyme (through the Met-33 residue), thereby preventing its breakdown. It has been called fasciculin since after injection into mice it causes severe, generalized and long-lasting (5-7 hours) fasciculations. The protein is Fasciculin-2 of Dendroaspis angusticeps (Eastern green mamba).